Consider the following 278-residue polypeptide: Glucosamine-6-phosphate deaminase (278 aa).

The active-site Proton acceptor; for enolization step is the Asp72. Catalysis depends on Asp141, which acts as the For ring-opening step. His143 functions as the Proton acceptor; for ring-opening step in the catalytic mechanism. Glu148 serves as the catalytic For ring-opening step.

This sequence belongs to the glucosamine/galactosamine-6-phosphate isomerase family. In terms of assembly, homohexamer.

The protein localises to the cytoplasm. The enzyme catalyses alpha-D-glucosamine 6-phosphate + H2O = beta-D-fructose 6-phosphate + NH4(+). The protein operates within nucleotide-sugar biosynthesis; UDP-N-acetyl-alpha-D-glucosamine biosynthesis; alpha-D-glucosamine 6-phosphate from D-fructose 6-phosphate: step 1/1. Its function is as follows. Catalyzes the reversible conversion of alpha-D-glucosamine 6-phosphate (GlcN-6P) into beta-D-fructose 6-phosphate (Fru-6P) and ammonium ion, a regulatory reaction step in de novo uridine diphosphate-N-acetyl-alpha-D-glucosamine (UDP-GlcNAc) biosynthesis via hexosamine pathway. The protein is Glucosamine-6-phosphate deaminase (Gnpda1) of Aedes aegypti (Yellowfever mosquito).